Consider the following 110-residue polypeptide: B3 domain-containing protein LOC_Os02g10420 (110 aa).

The TF-B3 DNA-binding region spans 1–104; the sequence is MSAMLNENVP…VLSVTVHKAD (104 aa).

It is found in the nucleus. This is B3 domain-containing protein LOC_Os02g10420 from Oryza sativa subsp. japonica (Rice).